Here is a 543-residue protein sequence, read N- to C-terminus: Putative pectinesterase/pectinesterase inhibitor 22 (543 aa).

Positions 1 to 19 (MGITTALLLVMLMSVHTSS) are cleaved as a signal peptide. A pectinesterase inhibitor 22 region spans residues 38 to 197 (AKACQFIDAH…TQLVSNVLDM (160 aa)). 2 N-linked (GlcNAc...) asparagine glycosylation sites follow: asparagine 211 and asparagine 263. Residues 240 to 527 (NTVVAIDGKG…FTVGSFIDGR (288 aa)) are pectinesterase 22. Substrate is bound by residues threonine 315 and glutamine 345. Aspartate 368 serves as the catalytic Proton donor; for pectinesterase activity. The cysteines at positions 382 and 402 are disulfide-linked. Aspartate 389 functions as the Nucleophile; for pectinesterase activity in the catalytic mechanism. Residues arginine 448 and tryptophan 450 each coordinate substrate.

It in the N-terminal section; belongs to the PMEI family. In the C-terminal section; belongs to the pectinesterase family.

Its subcellular location is the secreted. The protein localises to the cell wall. The catalysed reaction is [(1-&gt;4)-alpha-D-galacturonosyl methyl ester](n) + n H2O = [(1-&gt;4)-alpha-D-galacturonosyl](n) + n methanol + n H(+). Its pathway is glycan metabolism; pectin degradation; 2-dehydro-3-deoxy-D-gluconate from pectin: step 1/5. Its function is as follows. Acts in the modification of cell walls via demethylesterification of cell wall pectin. This Arabidopsis thaliana (Mouse-ear cress) protein is Putative pectinesterase/pectinesterase inhibitor 22 (PME22).